A 321-amino-acid chain; its full sequence is MRIGHFQLTNCLIAAPMAGITDRPFRALCHGMGAGMAVSEMLSSNPEVWRTDKSRLRMVHVDEPGIRNVQIAGNDPDEMAAAARINVASGAQIIDINMGCPAKKVNRKLAGSALLQHPDLVKQILSAVVNAVDVPVTLKIRTGWSPEHRNCIEIAQLAENCGIQALTIHGRTRSCLFNGEAEYDSIRAVKQTVSIPVIANGDITDPHKARAVLDYTGADALMIGRAAQGRPWIFREIQHYLDTGELLPPMPLGEVQRLLDGHIRELHDFYGPGKGFRIARKHVSWYLQEHAPNDQFRRTFNAIEDASEQLEALEAYFENLA.

Residues 16–18 and glutamine 70 each bind FMN; that span reads PMA. The active-site Proton donor is the cysteine 100. FMN is bound by residues lysine 139, 200–202, and 224–225; these read NGD and GR.

This sequence belongs to the Dus family. DusB subfamily. The cofactor is FMN.

It carries out the reaction a 5,6-dihydrouridine in tRNA + NAD(+) = a uridine in tRNA + NADH + H(+). It catalyses the reaction a 5,6-dihydrouridine in tRNA + NADP(+) = a uridine in tRNA + NADPH + H(+). Functionally, catalyzes the synthesis of 5,6-dihydrouridine (D), a modified base found in the D-loop of most tRNAs, via the reduction of the C5-C6 double bond in target uridines. The polypeptide is tRNA-dihydrouridine synthase B (Yersinia pestis).